Reading from the N-terminus, the 358-residue chain is Aerobic magnesium-protoporphyrin IX monomethyl ester [oxidative] cyclase (358 aa).

The protein belongs to the AcsF family. The cofactor is Fe cation.

The catalysed reaction is Mg-protoporphyrin IX 13-monomethyl ester + 3 NADPH + 3 O2 + 2 H(+) = 3,8-divinyl protochlorophyllide a + 3 NADP(+) + 5 H2O. It participates in porphyrin-containing compound metabolism; chlorophyll biosynthesis. Catalyzes the formation of the isocyclic ring in chlorophyll biosynthesis in aerobic conditions. Mediates the cyclase reaction, which results in the formation of divinylprotochlorophyllide (Pchlide) characteristic of all chlorophylls from magnesium-protoporphyrin IX 13-monomethyl ester (MgPMME). The protein is Aerobic magnesium-protoporphyrin IX monomethyl ester [oxidative] cyclase of Rubrivivax gelatinosus (Rhodocyclus gelatinosus).